The sequence spans 144 residues: Maximins 7/H13 (144 aa).

The first 18 residues, 1 to 18 (MNFKYIVAVSFLIASAYA), serve as a signal peptide directing secretion. Residues 19-43 (RSEENDEQSLSQRDVLEEESLREIR) constitute a propeptide that is removed on maturation. At N70 the chain carries Asparagine amide. Residues 74–123 (TAEDHEVMKRLEAVMRDLDSLDYPEEAAERETRGFNQEEIANLFTKKEKR) constitute a propeptide that is removed on maturation. Leucine amide is present on L143.

This sequence belongs to the bombinin family. In terms of tissue distribution, expressed by the skin glands.

The protein localises to the secreted. In terms of biological role, maximin-7 shows antimicrobial activity against bacteria and against the fungus C.albicans. It has little hemolytic activity. Maximin-H13 shows antimicrobial activity against bacteria and against the fungus C.albicans. Shows strong hemolytic activity. The chain is Maximins 7/H13 from Bombina maxima (Giant fire-bellied toad).